The chain runs to 981 residues: Ephrin type-A receptor 3 (981 aa).

The N-terminal stretch at Met1–Gln20 is a signal peptide. Residues Ala21–Thr545 are Extracellular-facing. Residues Glu29 to Leu210 form the Eph LBD domain. Fibronectin type-III domains are found at residues Pro328 to Thr441 and Val442 to Glu533. Residues Asn340, Asn410, Asn435, and Asn485 are each glycosylated (N-linked (GlcNAc...) asparagine). The chain crosses the membrane as a helical span at residues Ile546–Ile566. Residues Val567–Val981 are Cytoplasmic-facing. 2 positions are modified to phosphotyrosine; by autocatalysis: Tyr601 and Tyr607. The Protein kinase domain maps to Ile626–Ile887. ATP is bound by residues Gly633–Gly638, Lys658, and Glu705–Ser711. Tyr706 is subject to Phosphotyrosine; by autocatalysis. Catalysis depends on Asp751, which acts as the Proton acceptor. Arg755–Asn756 is a binding site for ATP. Residues Tyr784 and Tyr927 each carry the phosphotyrosine; by autocatalysis modification. Residues Ala910 to His974 form the SAM domain. Residues Val979–Val981 carry the PDZ-binding motif.

This sequence belongs to the protein kinase superfamily. Tyr protein kinase family. Ephrin receptor subfamily. As to quaternary structure, heterotetramer upon binding of the ligand. The heterotetramer is composed of an ephrin dimer and a receptor dimer. Oligomerization is probably required to induce biological responses. Autophosphorylates upon activation by efna5. Widely expressed in the developing zebrafish nervous system.

Its subcellular location is the cell membrane. It carries out the reaction L-tyrosyl-[protein] + ATP = O-phospho-L-tyrosyl-[protein] + ADP + H(+). Functionally, receptor tyrosine kinase which binds promiscuously membrane-bound ephrin family ligands residing on adjacent cells, leading to contact-dependent bidirectional signaling into neighboring cells. The signaling pathway downstream of the receptor is referred to as forward signaling while the signaling pathway downstream of the ephrin ligand is referred to as reverse signaling. Highly promiscuous for ephrin-A ligands it binds preferentially efna5. Upon activation by efna5 regulates cell-cell adhesion, cytoskeletal organization and cell migration. Plays a role in cardiac cells migration and differentiation probably through activation by efna1. Involved in the retinotectal mapping of neurons. May also control the segregation but not the guidance of motor and sensory axons during neuromuscular circuit development. The sequence is that of Ephrin type-A receptor 3 (epha3) from Danio rerio (Zebrafish).